The sequence spans 167 residues: NAD(P)H-quinone oxidoreductase subunit I, chloroplastic (167 aa).

2 4Fe-4S ferredoxin-type domains span residues 55–84 (GRIH…VDWK) and 95–124 (LNYS…MTEE). The [4Fe-4S] cluster site is built by C64, C67, C70, C74, C104, C107, C110, and C114.

Belongs to the complex I 23 kDa subunit family. In terms of assembly, NDH is composed of at least 16 different subunits, 5 of which are encoded in the nucleus. The cofactor is [4Fe-4S] cluster.

It is found in the plastid. It localises to the chloroplast thylakoid membrane. The enzyme catalyses a plastoquinone + NADH + (n+1) H(+)(in) = a plastoquinol + NAD(+) + n H(+)(out). It catalyses the reaction a plastoquinone + NADPH + (n+1) H(+)(in) = a plastoquinol + NADP(+) + n H(+)(out). NDH shuttles electrons from NAD(P)H:plastoquinone, via FMN and iron-sulfur (Fe-S) centers, to quinones in the photosynthetic chain and possibly in a chloroplast respiratory chain. The immediate electron acceptor for the enzyme in this species is believed to be plastoquinone. Couples the redox reaction to proton translocation, and thus conserves the redox energy in a proton gradient. The chain is NAD(P)H-quinone oxidoreductase subunit I, chloroplastic from Vitis vinifera (Grape).